The primary structure comprises 697 residues: MVNFGKRLMADQLEEWKEYYINYKMMKKKVKQYVQQTQNGGRNREQVLKEFSRMLDDQIEKIVLFLLQQQGHLASRIEKLGEERALLMEQADASQISELREAYREVGIDLMKLLRFVDMNATGIRKILKKFDKRFGYKFTDYYVSTRANHPCSQLQQIFKQVGIVAVVGALSRNLAFLQDHQGNFPSIYDHPSITLKDPIIEQINHSVQKLTHATNLLQFIGQHALIIPEDMHSGSEDLVDDQSYHFMSLLLNLANTFLYMVNTYIIVPTADDYSVSLGAAATVCGVIIGSMAVAQVFSSVYFSAWSNKSYFRPLVFSSIMLFLGNLLYALAYDVNSLTVLIVGRLLCGLGSARAVNRRYISDCVPLKTRLQASAGFVSASALGMACGPALAGLLQTNFKIYGFTFDQNTLPGWIMCLAWITYLFWLWISFKEPDHIVRENSVNTPSSDSGHRRNSNLEDGLAQPFLIDAKESLDENGEDNDENEEDPEDSHKPATSLAAAYRLLTPSVKVQLLIYFMLKFAMEILLSESSVVTTFYFNWSTSTVAMFLAVLGLTVLPVNVIVGSYVTNLFQDRQILVASEIMVLIGIAMSFRFTSHYSVPQYVSSALITFVFAEVLEGVNLSLLSRVMSSRLSRGTYNGGLLSTEAGTLARVAADMTITAAGYLGQNSLLNVTLLPSFVICVASIVATFCTYNSLY.

The 144-residue stretch at 2–145 folds into the SPX domain; it reads VNFGKRLMAD…GYKFTDYYVS (144 aa). Helical transmembrane passes span 247–267, 278–298, 315–335, 338–356, 375–395, 411–431, 513–533, 544–564, 576–596, 604–624, and 670–690; these read FMSLLLNLANTFLYMVNTYII, LGAAATVCGVIIGSMAVAQVF, LVFSSIMLFLGNLLYALAYDV, LTVLIVGRLLCGLGSARAV, AGFVSASALGMACGPALAGLL, LPGWIMCLAWITYLFWLWISF, LLIYFMLKFAMEILLSESSVV, TVAMFLAVLGLTVLPVNVIVG, ILVASEIMVLIGIAMSFRFTS, VSSALITFVFAEVLEGVNLSL, and LLNVTLLPSFVICVASIVATF.

Belongs to the major facilitator superfamily.

It is found in the membrane. The polypeptide is SPX domain-containing membrane protein OsI_08463 (Oryza sativa subsp. indica (Rice)).